We begin with the raw amino-acid sequence, 374 residues long: Phosphoserine aminotransferase (374 aa).

R46 serves as a coordination point for L-glutamate. Residues 80–81 (AT), F104, T150, D174, and Q197 each bind pyridoxal 5'-phosphate. N6-(pyridoxal phosphate)lysine is present on K198. 249-250 (NT) provides a ligand contact to pyridoxal 5'-phosphate.

It belongs to the class-V pyridoxal-phosphate-dependent aminotransferase family. SerC subfamily. Homodimer. It depends on pyridoxal 5'-phosphate as a cofactor.

It localises to the cytoplasm. The catalysed reaction is O-phospho-L-serine + 2-oxoglutarate = 3-phosphooxypyruvate + L-glutamate. It catalyses the reaction 4-(phosphooxy)-L-threonine + 2-oxoglutarate = (R)-3-hydroxy-2-oxo-4-phosphooxybutanoate + L-glutamate. Its pathway is amino-acid biosynthesis; L-serine biosynthesis; L-serine from 3-phospho-D-glycerate: step 2/3. The protein operates within cofactor biosynthesis; pyridoxine 5'-phosphate biosynthesis; pyridoxine 5'-phosphate from D-erythrose 4-phosphate: step 3/5. Functionally, catalyzes the reversible conversion of 3-phosphohydroxypyruvate to phosphoserine and of 3-hydroxy-2-oxo-4-phosphonooxybutanoate to phosphohydroxythreonine. In Nocardioides sp. (strain ATCC BAA-499 / JS614), this protein is Phosphoserine aminotransferase.